A 375-amino-acid chain; its full sequence is Superinfection exclusion protein (375 aa).

A signal peptide spans 1–15 (MIALLILSLACSVSA).

The protein belongs to the serpin family. Orthopoxvirus OPG040 subfamily. Interacts with OPG185/A56 protein.

Its subcellular location is the virion membrane. It is found in the host cell membrane. Its function is as follows. Negatively regulates superinfection and syncytium formation in infected host cells. Acts in concert with OPG185/A56 protein at the host cell membrane by interacting with and inhibiting the mature virion entry/fusion complex (EFC). This mechanism ensures that new virions released from the cell cannot enter already infected cells. The sequence is that of Superinfection exclusion protein (OPG040) from Cynomys gunnisoni (Gunnison's prairie dog).